The primary structure comprises 193 residues: Dual-action ribosomal maturation protein DarP (193 aa).

Over residues M1 to E10 the composition is skewed to basic and acidic residues. Disordered regions lie at residues M1–R20 and Q171–E193. Positions G181–E193 are enriched in acidic residues.

It belongs to the DarP family.

It localises to the cytoplasm. Its function is as follows. Member of a network of 50S ribosomal subunit biogenesis factors which assembles along the 30S-50S interface, preventing incorrect 23S rRNA structures from forming. Promotes peptidyl transferase center (PTC) maturation. The polypeptide is Dual-action ribosomal maturation protein DarP (Xanthomonas oryzae pv. oryzae (strain KACC10331 / KXO85)).